A 607-amino-acid chain; its full sequence is Hemagglutinin glycoprotein (607 aa).

The Intravirion portion of the chain corresponds to 1-37; the sequence is MLSYQDKAGAFYKDNARANSTKLSLVTEEHGGRRPPY. Residues 38–58 form a helical membrane-spanning segment; it reads LLFVLLVLLVGILALLAITGV. Over 59 to 607 the chain is Virion surface; it reads RFHQVSTSNM…IRFSCNRSNP (549 aa). Residues Asn-149, Asn-391, Asn-422, Asn-456, Asn-587, and Asn-603 are each glycosylated (N-linked (GlcNAc...) asparagine; by host).

The protein belongs to the paramyxoviruses hemagglutinin-neuraminidase family. Non-sialidase subfamily. Binds canine SLAMF1 at the cell surface.

It is found in the virion membrane. Its subcellular location is the host cell membrane. In terms of biological role, attaches the virus to cell receptors and thereby initiating infection. Binding of H protein to the receptor induces a conformational change that allows the F protein to trigger virion/cell membranes fusion. The cellular receptor might be SLAM, and may explain the lymphotropism of the virus. The polypeptide is Hemagglutinin glycoprotein (H) (Ailuropoda melanoleuca (Giant panda)).